The primary structure comprises 294 residues: Large ribosomal subunit protein uL2 (294 aa).

2 disordered regions span residues 1–37 and 228–294; these read MGIR…RPEK and GSVM…RAAQ. The span at 23–37 shows a compositional bias: basic and acidic residues; it reads ELSRDENGKRPRPEK. Positions 264–285 are enriched in basic residues; the sequence is KTRKRNKPSNKFIVRGRRRGGR.

It belongs to the universal ribosomal protein uL2 family. As to quaternary structure, part of the 50S ribosomal subunit. Forms a bridge to the 30S subunit in the 70S ribosome.

Its function is as follows. One of the primary rRNA binding proteins. Required for association of the 30S and 50S subunits to form the 70S ribosome, for tRNA binding and peptide bond formation. It has been suggested to have peptidyltransferase activity; this is somewhat controversial. Makes several contacts with the 16S rRNA in the 70S ribosome. This Synechococcus sp. (strain JA-2-3B'a(2-13)) (Cyanobacteria bacterium Yellowstone B-Prime) protein is Large ribosomal subunit protein uL2.